Here is a 1099-residue protein sequence, read N- to C-terminus: Transmembrane protein 132C (1099 aa).

The signal sequence occupies residues 1-31 (MRSEGAAPRRAARYGALSLVLATLLGQVTES). Residues 32–915 (RGVMDNIQRF…LMQTAHGLSD (884 aa)) lie on the Extracellular side of the membrane. Asn-95 carries N-linked (GlcNAc...) asparagine glycosylation. The interval 237 to 260 (GDCTGGDTRKDNAIRPGKDGQEGR) is disordered. N-linked (GlcNAc...) asparagine glycosylation is found at Asn-314 and Asn-371. The segment at 801–872 (DADSSQTGEK…NNVGKSGRRD (72 aa)) is disordered. Over residues 813-849 (EEIKNHASDRRQKIQDLERPGQDELYHGNFPGDREEG) the composition is skewed to basic and acidic residues. Residues 916 to 936 (LEIGMYALLGVFCLAILVFLI) form a helical membrane-spanning segment. The Cytoplasmic portion of the chain corresponds to 937 to 1099 (NCATFAFKYR…TYLEKFQDSV (163 aa)). The tract at residues 1002–1045 (NHLLLNGGSQKPTQSQVHRPPGSGGRQTREPRQEPANSPTSKMK) is disordered. The span at 1008–1018 (GGSQKPTQSQV) shows a compositional bias: polar residues.

This sequence belongs to the TMEM132 family.

It is found in the membrane. The polypeptide is Transmembrane protein 132C (Tmem132c) (Mus musculus (Mouse)).